Here is a 255-residue protein sequence, read N- to C-terminus: tRNA (guanine-N(1)-)-methyltransferase (255 aa).

S-adenosyl-L-methionine-binding positions include Gly117 and 137–142 (LGDFVL).

The protein belongs to the RNA methyltransferase TrmD family. In terms of assembly, homodimer.

The protein localises to the cytoplasm. It catalyses the reaction guanosine(37) in tRNA + S-adenosyl-L-methionine = N(1)-methylguanosine(37) in tRNA + S-adenosyl-L-homocysteine + H(+). Functionally, specifically methylates guanosine-37 in various tRNAs. The sequence is that of tRNA (guanine-N(1)-)-methyltransferase from Paraburkholderia phymatum (strain DSM 17167 / CIP 108236 / LMG 21445 / STM815) (Burkholderia phymatum).